Consider the following 277-residue polypeptide: Shikimate dehydrogenase (NADP(+)) (277 aa).

Residues 18–20 (SKS) and Thr-65 each bind shikimate. Lys-69 (proton acceptor) is an active-site residue. Glu-81 contacts NADP(+). Shikimate is bound by residues Asn-90 and Asp-106. Residues 130–134 (GAGGA), 154–159 (NRTFSK), and Met-217 each bind NADP(+). Tyr-219 provides a ligand contact to shikimate. Gly-241 contacts NADP(+).

This sequence belongs to the shikimate dehydrogenase family. Homodimer.

The enzyme catalyses shikimate + NADP(+) = 3-dehydroshikimate + NADPH + H(+). It participates in metabolic intermediate biosynthesis; chorismate biosynthesis; chorismate from D-erythrose 4-phosphate and phosphoenolpyruvate: step 4/7. Its function is as follows. Involved in the biosynthesis of the chorismate, which leads to the biosynthesis of aromatic amino acids. Catalyzes the reversible NADPH linked reduction of 3-dehydroshikimate (DHSA) to yield shikimate (SA). The sequence is that of Shikimate dehydrogenase (NADP(+)) from Vibrio parahaemolyticus serotype O3:K6 (strain RIMD 2210633).